Reading from the N-terminus, the 312-residue chain is Methionyl-tRNA formyltransferase (312 aa).

Residue 107-110 (SLLP) coordinates (6S)-5,6,7,8-tetrahydrofolate.

Belongs to the Fmt family.

The enzyme catalyses L-methionyl-tRNA(fMet) + (6R)-10-formyltetrahydrofolate = N-formyl-L-methionyl-tRNA(fMet) + (6S)-5,6,7,8-tetrahydrofolate + H(+). Attaches a formyl group to the free amino group of methionyl-tRNA(fMet). The formyl group appears to play a dual role in the initiator identity of N-formylmethionyl-tRNA by promoting its recognition by IF2 and preventing the misappropriation of this tRNA by the elongation apparatus. The protein is Methionyl-tRNA formyltransferase of Endomicrobium trichonymphae.